Consider the following 112-residue polypeptide: uncharacterized protein (112 aa).

The chain crosses the membrane as a helical span at residues 89 to 106 (TLYVLVIVGLTILCFLLV).

The protein belongs to the IIV-6 466R family.

It localises to the membrane. This is an uncharacterized protein from Aedes vexans (Inland floodwater mosquito).